The following is a 386-amino-acid chain: Protein phosphatase methylesterase 1 (386 aa).

Positions 1-38 (MSALEKSMHLGRLPSRPPLPGSGGSQSGAKMRMGPGRK) are disordered. Serine 15 bears the Phosphoserine mark. Arginine 16 carries the post-translational modification Asymmetric dimethylarginine; alternate. Arginine 16 carries the post-translational modification Omega-N-methylarginine; alternate. Serine 42 carries the post-translational modification Phosphoserine. Catalysis depends on residues serine 156 and aspartate 181. Acidic residues predominate over residues 254–265 (IIEEEEEDEEGS). The interval 254–280 (IIEEEEEDEEGSESISKRKKEDDMETK) is disordered. Over residues 268-280 (ISKRKKEDDMETK) the composition is skewed to basic and acidic residues. The active site involves histidine 349.

The protein belongs to the AB hydrolase superfamily. As to quaternary structure, binds PPP2CA and PPP2CB. Post-translationally, phosphorylated by SIK1 following increases in intracellular sodium, leading to dissociation from the protein phosphatase 2A (PP2A) complex and subsequent dephosphorylation of sodium/potassium-transporting ATPase ATP1A1.

The enzyme catalyses [phosphatase 2A protein]-C-terminal L-leucine methyl ester + H2O = [phosphatase 2A protein]-C-terminal L-leucine + methanol + H(+). In terms of biological role, demethylates proteins that have been reversibly carboxymethylated. Demethylates PPP2CB (in vitro) and PPP2CA. Binding to PPP2CA displaces the manganese ion and inactivates the enzyme. This chain is Protein phosphatase methylesterase 1 (PPME1), found in Homo sapiens (Human).